The primary structure comprises 140 residues: Phosphopantetheine adenylyltransferase (140 aa).

S9 serves as a coordination point for substrate. Residues 9 to 10 and H17 each bind ATP; that span reads SF. Substrate contacts are provided by K41, T74, and R88. ATP is bound by residues 89-91, E99, and 124-130; these read GLR and KRSLSST.

The protein belongs to the bacterial CoaD family. In terms of assembly, homohexamer. The cofactor is Mg(2+).

The protein resides in the cytoplasm. The catalysed reaction is (R)-4'-phosphopantetheine + ATP + H(+) = 3'-dephospho-CoA + diphosphate. It participates in cofactor biosynthesis; coenzyme A biosynthesis; CoA from (R)-pantothenate: step 4/5. Reversibly transfers an adenylyl group from ATP to 4'-phosphopantetheine, yielding dephospho-CoA (dPCoA) and pyrophosphate. This chain is Phosphopantetheine adenylyltransferase, found in Mycoplasma mycoides subsp. mycoides SC (strain CCUG 32753 / NCTC 10114 / PG1).